A 133-amino-acid chain; its full sequence is Large ribosomal subunit protein bL17 (133 aa).

Belongs to the bacterial ribosomal protein bL17 family. Part of the 50S ribosomal subunit. Contacts protein L32.

The protein is Large ribosomal subunit protein bL17 of Nitratidesulfovibrio vulgaris (strain DSM 19637 / Miyazaki F) (Desulfovibrio vulgaris).